Here is a 163-residue protein sequence, read N- to C-terminus: NADH-quinone oxidoreductase subunit 9 (163 aa).

4Fe-4S ferredoxin-type domains are found at residues 54–84 and 94–123; these read LRRYPNGEERCIACKLCEAVCPAQAITIDAE and TRYDIDMTKCIYCGFCQEACPVDAIVEGPN. Positions 64, 67, 70, 74, 103, 106, 109, and 113 each coordinate [4Fe-4S] cluster.

It belongs to the complex I 23 kDa subunit family. NDH-1 is composed of at least 14 different subunits, Nqo1 to Nqo14. The complex has a L-shaped structure, with the hydrophobic arm (subunits Nqo7, Nqo8, Nqo10 to Nqo14) embedded in the inner membrane and the hydrophilic peripheral arm (subunits Nqo1 to Nqo6, Nqo9) protruding into the bacterial cytoplasm. The hydrophilic domain contains all the redox centers. The cofactor is [4Fe-4S] cluster.

It is found in the cell inner membrane. The enzyme catalyses a quinone + NADH + 5 H(+)(in) = a quinol + NAD(+) + 4 H(+)(out). NDH-1 shuttles electrons from NADH, via FMN and iron-sulfur (Fe-S) centers, to quinones in the respiratory chain. The immediate electron acceptor for the enzyme in this species is believed to be ubiquinone. Couples the redox reaction to proton translocation (for every two electrons transferred, four hydrogen ions are translocated across the cytoplasmic membrane), and thus conserves the redox energy in a proton gradient. The sequence is that of NADH-quinone oxidoreductase subunit 9 from Paracoccus denitrificans.